The sequence spans 879 residues: Alanine--tRNA ligase (879 aa).

4 residues coordinate Zn(2+): H566, H570, C668, and H672.

Belongs to the class-II aminoacyl-tRNA synthetase family. The cofactor is Zn(2+).

It is found in the cytoplasm. It catalyses the reaction tRNA(Ala) + L-alanine + ATP = L-alanyl-tRNA(Ala) + AMP + diphosphate. In terms of biological role, catalyzes the attachment of alanine to tRNA(Ala) in a two-step reaction: alanine is first activated by ATP to form Ala-AMP and then transferred to the acceptor end of tRNA(Ala). Also edits incorrectly charged Ser-tRNA(Ala) and Gly-tRNA(Ala) via its editing domain. The sequence is that of Alanine--tRNA ligase from Clostridium beijerinckii (strain ATCC 51743 / NCIMB 8052) (Clostridium acetobutylicum).